Consider the following 623-residue polypeptide: MEKREFKAESKRLLDIVINSIYTNREIFLRELISNASDAIDKVYYKTLGDSSLTFNKDDYYIKIKPNKEERTLTISDKGIGMTEKELDENLGVIAKSGSLQFKKENEIKDGFDIIGQFGVGFYSGFLVADKITVITKAFGADKAYKWESDGVDGYTISEAEKDSFGTDIILHLKANDEDENYDEFLEEYKLKSLIKKYSDFIRYPIKLDVTKSRVKEGTENEHEEYVEEETVNSMVPLWRRNKNELTDDDYNNFYVEKRFGFDKPLRHMHISVDGMISYNSILYIPENIPYDYYTKEYEKGLELYSNGVLIMEKCSELLPDYFGFVKGIVDSQDLSLNISREMLQHDRQLSRIAKNIKTKIKNELESMMKNDRESYEKFYKSFGRQLKYGVYDDFGMNKDELKDLLMFYSSKEKKMVSLAEYVERMAEDQKYIYYAVGESNERIEKMPQTEMVLDKGYEILYFTEDVDEFAIKMLMNYKEKEFKSVSSGDLGIESEEENKKENEENKGIFEAMKEALGEKISAVKASSRLKNYPVCLSSEGEVSIEMEKILSAMPNNQGVKAQKVLEVNTNHEVFNSLKDALENDKDKFNLYTKLLYNQALLVEGLSIEDPVDFTNDICKLMK.

Residues 1-341 (MEKREFKAES…SQDLSLNISR (341 aa)) are a; substrate-binding. Residues 342–549 (EMLQHDRQLS…EGEVSIEMEK (208 aa)) form a b region. The tract at residues 550 to 623 (ILSAMPNNQG…FTNDICKLMK (74 aa)) is c.

Belongs to the heat shock protein 90 family. In terms of assembly, homodimer.

The protein resides in the cytoplasm. Molecular chaperone. Has ATPase activity. In Clostridium perfringens (strain ATCC 13124 / DSM 756 / JCM 1290 / NCIMB 6125 / NCTC 8237 / Type A), this protein is Chaperone protein HtpG.